The following is a 125-amino-acid chain: Small ribosomal subunit protein eS8 (125 aa).

The segment at 1–36 is disordered; the sequence is MKDQGRSTRKRTGGRLHDVSKKKRHQLGREPAETTV. The segment covering 7–26 has biased composition (basic residues); sequence STRKRTGGRLHDVSKKKRHQ. The span at 27-36 shows a compositional bias: basic and acidic residues; sequence LGREPAETTV.

The protein belongs to the eukaryotic ribosomal protein eS8 family. As to quaternary structure, part of the 30S ribosomal subunit.

This Haloquadratum walsbyi (strain DSM 16790 / HBSQ001) protein is Small ribosomal subunit protein eS8.